We begin with the raw amino-acid sequence, 712 residues long: Polyribonucleotide nucleotidyltransferase (712 aa).

The Mg(2+) site is built by D485 and D491. In terms of domain architecture, KH spans 552–611 (PKITTISVPKEKIRDVIGQGGKVIREIVEYSGAKIDINDDGTIMIAASSEDQATRAIERI). The S1 motif domain occupies 621 to 689 (GAIYTGKVVK…DRGKVKLSMR (69 aa)).

The protein belongs to the polyribonucleotide nucleotidyltransferase family. The cofactor is Mg(2+).

The protein localises to the cytoplasm. The catalysed reaction is RNA(n+1) + phosphate = RNA(n) + a ribonucleoside 5'-diphosphate. In terms of biological role, involved in mRNA degradation. Catalyzes the phosphorolysis of single-stranded polyribonucleotides processively in the 3'- to 5'-direction. The chain is Polyribonucleotide nucleotidyltransferase from Gluconacetobacter diazotrophicus (strain ATCC 49037 / DSM 5601 / CCUG 37298 / CIP 103539 / LMG 7603 / PAl5).